Reading from the N-terminus, the 471-residue chain is Cell division protein FtsP (471 aa).

Positions 1–27 form a signal peptide, tat-type signal; sequence MSLSRRSFLQASGVALAAGALPLKAEA. One can recognise a Plastocyanin-like domain in the interval 229–288; it reads VRLRLLNASNARRYELSMTDNRAFHVVASDLGFLPAPMTVKRLSLGPGERREVLVDMSQG.

This sequence belongs to the FtsP family. In terms of processing, predicted to be exported by the Tat system. The position of the signal peptide cleavage has not been experimentally proven.

It is found in the periplasm. Its function is as follows. Cell division protein that is required for growth during stress conditions. May be involved in protecting or stabilizing the divisomal assembly under conditions of stress. This chain is Cell division protein FtsP, found in Rahnella sp. (strain Y9602).